Here is a 500-residue protein sequence, read N- to C-terminus: NAD(P)H-quinone oxidoreductase chain 4, chloroplastic (500 aa).

14 helical membrane-spanning segments follow: residues 4–24 (FPWL…IFFL), 37–57 (ICIC…HFQL), 84–104 (GLSI…TLAA), 111–129 (SRLF…IGSF), 134–154 (LLLF…LLSM), 167–187 (FILY…GMGL), 208–228 (ALEI…SPII), 242–262 (HYST…YGLV), 272–292 (AHSI…IYAA), 305–325 (IAYS…SITD), 330–350 (GAIL…FLAG), 374–396 (IFTM…GFVA), 411–431 (FFMP…LTPI), and 462–482 (LFVS…PDFV).

Belongs to the complex I subunit 4 family.

It localises to the plastid. The protein localises to the chloroplast thylakoid membrane. The enzyme catalyses a plastoquinone + NADH + (n+1) H(+)(in) = a plastoquinol + NAD(+) + n H(+)(out). It carries out the reaction a plastoquinone + NADPH + (n+1) H(+)(in) = a plastoquinol + NADP(+) + n H(+)(out). The protein is NAD(P)H-quinone oxidoreductase chain 4, chloroplastic of Chloranthus spicatus (Chulantree).